A 454-amino-acid chain; its full sequence is Probable 1,4-beta-D-glucan cellobiohydrolase C (454 aa).

Positions 1–19 (MKHLASSIALTLLLPAVQA) are cleaved as a signal peptide. Positions 20–55 (QQTVWGQCGGQGWSGPTSCVAGAACSTLNPYYAQCI) constitute a CBM1 domain. 2 disulfides stabilise this stretch: C27–C44 and C38–C54. 2 thr-rich linker regions span residues 59–94 (TATS…PTVT) and 95–454 (ASGN…NPSF). The disordered stretch occupies residues 68 to 95 (TTAATTTSQTTTKPTTTGPTTSAPTVTA). The active site involves D184. 2 disulfides stabilise this stretch: C185–C244 and C376–C423. The active-site Proton donor is D230. D409 serves as the catalytic Nucleophile. N-linked (GlcNAc...) asparagine glycosylation is present at N413.

This sequence belongs to the glycosyl hydrolase 6 (cellulase B) family.

Its subcellular location is the secreted. The enzyme catalyses Hydrolysis of (1-&gt;4)-beta-D-glucosidic linkages in cellulose and cellotetraose, releasing cellobiose from the non-reducing ends of the chains.. Functionally, the biological conversion of cellulose to glucose generally requires three types of hydrolytic enzymes: (1) Endoglucanases which cut internal beta-1,4-glucosidic bonds; (2) Exocellobiohydrolases that cut the disaccharide cellobiose from the non-reducing end of the cellulose polymer chain; (3) Beta-1,4-glucosidases which hydrolyze the cellobiose and other short cello-oligosaccharides to glucose. This Aspergillus fumigatus (strain CBS 144.89 / FGSC A1163 / CEA10) (Neosartorya fumigata) protein is Probable 1,4-beta-D-glucan cellobiohydrolase C (cbhC).